Consider the following 358-residue polypeptide: Bis(monoacylglycero)phosphate synthase CLN5 (358 aa).

Residues 1–23 (MAQEVDTAQGAEMRRGAGAARGR) are Cytoplasmic-facing. Residues 24–40 (ASWCWALALLWLAVVPG) form a helical; Signal-anchor for type II membrane protein membrane-spanning segment. The Lumenal segment spans residues 41–358 (WSRVSGIPSR…PIRNKTLSGL (318 aa)). 2 disulfide bridges follow: cysteine 70-cysteine 159 and cysteine 77-cysteine 165. Histidine 117 (proton acceptor) is an active-site residue. 4 N-linked (GlcNAc...) asparagine glycosylation sites follow: asparagine 130, asparagine 143, asparagine 178, and asparagine 203. Catalysis depends on cysteine 231, which acts as the Nucleophile; Acyl-thioester intermediate. Asparagine 255, asparagine 271, and asparagine 281 each carry an N-linked (GlcNAc...) asparagine glycan. Positions 304–343 (FLLSLLQIFDAVIVHKQFYLFYNFEYWFLPMKFPFIKITY) are membrane-anchoring. Residue asparagine 352 is glycosylated (N-linked (GlcNAc...) asparagine).

This sequence belongs to the CLN5 family. In terms of assembly, multimer. Interacts with SORT1, RAB5A and RAB7A. Interacts with PPT1, TPP1, CLN3, CLN6, CLN8, ATP5F1A and ATP5F1B. N-glycosylated with both high mannose and complex type sugars. Glycosylation is important for proper folding and trafficking to the lysosomes. In terms of processing, the type II membrane signal anchor is proteolytically cleaved to produce a mature form that is transported to the lysosomes (Bis(monoacylglycero)phosphate synthase CLN5, secreted form). Post-translationally, can undergo proteolytic cleavage at the C-terminus, probably by a cysteine protease and may involve the removal of approximately 10-15 residues from the C-terminal end. As to expression, ubiquitous.

Its subcellular location is the lysosome. It localises to the membrane. It catalyses the reaction S-hexadecanoyl-L-cysteinyl-[protein] + H2O = L-cysteinyl-[protein] + hexadecanoate + H(+). The enzyme catalyses 2 1-acyl-sn-glycero-3-phospho-(1'-sn-glycerol) = 1-acyl-sn-glycero-3-phospho-(3'-acyl-sn-1'-glycerol) + sn-glycero-3-phospho-(1'-sn-glycerol). The catalysed reaction is 2 1-(9Z-octadecenoyl)-sn-glycero-3-phospho-(1'-sn-glycerol) = 1-(9Z-octadecenoyl)-sn-glycero-3-phospho-(3'-(9Z-octadecenoyl)-1'-sn-glycerol) + sn-glycero-3-phospho-(1'-sn-glycerol). It carries out the reaction 2 1-octadecanoyl-sn-glycero-3-phospho-(1'-sn-glycerol) = 1-octadecanoyl-sn-glycero-3-phospho-(3'-octadecanoyl-1'-sn-glycerol) + sn-glycero-3-phospho-(1'-sn-glycerol). It catalyses the reaction 2 1-hexadecanoyl-sn-glycero-3-phospho-(1'-sn-glycerol) = 1-hexadecanoyl-sn-glycero-3-phospho-(3'-hexadecanoyl-1'-sn-glycerol) + sn-glycero-3-phospho-(1'-sn-glycerol). The enzyme catalyses 2 1-tetradecanoyl-sn-glycero-3-phospho-(1'-sn-glycerol) = 1-tetradecanoyl-sn-glycero-3-phospho-(3'-tetradecanoyl-1'-sn-glycerol) + sn-glycero-3-phospho-(1'-sn-glycerol). Anionic phospholipids activate bis(monoacylglycero)phosphate (BMP) synthase activity. Amiodarone, a cationic amphiphilic drug inhibits BMP synthase activity towards liposomal lysophosphatidylglycerol. Palmostatin B inhibits palmitoyl protein thioesterase activity. In terms of biological role, catalyzes the synthesis of bis(monoacylglycero)phosphate (BMP) via transacylation of 2 molecules of lysophosphatidylglycerol (LPG). BMP also known as lysobisphosphatidic acid plays a key role in the formation of intraluminal vesicles and in maintaining intracellular cholesterol homeostasis. Can use only LPG as the exclusive lysophospholipid acyl donor for base exchange and displays BMP synthase activity towards various LPGs (LPG 14:0, LPG 16:0, LPG 18:0, LPG 18:1) with a higher preference for longer chain lengths. Plays a role in influencing the retrograde trafficking of lysosomal sorting receptors SORT1 and IGF2R from the endosomes to the trans-Golgi network by controlling the recruitment of retromer complex to the endosomal membrane. Regulates the localization and activation of RAB7A which is required to recruit the retromer complex to the endosomal membrane. Functionally, exhibits palmitoyl protein thioesterase (S-depalmitoylation) activity in vitro and most likely plays a role in protein S-depalmitoylation. In Homo sapiens (Human), this protein is Bis(monoacylglycero)phosphate synthase CLN5 (CLN5).